The sequence spans 494 residues: DEAD-box ATP-dependent RNA helicase 20 (494 aa).

The segment covering 1-20 (MSRFDGRAADPGSYRDRRSE) has biased composition (basic and acidic residues). The interval 1 to 39 (MSRFDGRAADPGSYRDRRSEGAFGGGTRAFAPTSKADSA) is disordered. The segment covering 29-39 (AFAPTSKADSA) has biased composition (low complexity). Positions 91 to 119 (REFRDVGFPEYVLQEITKAGFVEPTPIQS) match the Q motif motif. In terms of domain architecture, Helicase ATP-binding spans 122–297 (WPMALRGRDL…RNFLFDPYKV (176 aa)). An ATP-binding site is contributed by 135–142 (AETGSGKT). A DEAD box motif is present at residues 245 to 248 (DEAD). One can recognise a Helicase C-terminal domain in the interval 325–470 (KLVNLLEDIM…KVSPELANMG (146 aa)). The disordered stretch occupies residues 465 to 494 (ELANMGRGAPPPSSGHRDRYRGYGGGRSWS).

Belongs to the DEAD box helicase family. DDX5/DBP2 subfamily.

The protein resides in the nucleus. It catalyses the reaction ATP + H2O = ADP + phosphate + H(+). In terms of biological role, ATP-dependent RNA helicase involved nonsense-mediated mRNA decay and ribosome biogenesis through rRNA processing. The sequence is that of DEAD-box ATP-dependent RNA helicase 20 from Oryza sativa subsp. japonica (Rice).